The following is a 506-amino-acid chain: 2-isopropylmalate synthase (506 aa).

A Pyruvate carboxyltransferase domain is found at 6-267; it reads IIVFDTTLRD…YTDIVTKEIY (262 aa). Positions 15, 201, 203, and 237 each coordinate Mn(2+). The interval 391–506 is regulatory domain; the sequence is SIQTLSTSSC…LNSYLSMKNR (116 aa).

It belongs to the alpha-IPM synthase/homocitrate synthase family. LeuA type 1 subfamily. As to quaternary structure, homodimer. Requires Mn(2+) as cofactor.

The protein localises to the cytoplasm. The enzyme catalyses 3-methyl-2-oxobutanoate + acetyl-CoA + H2O = (2S)-2-isopropylmalate + CoA + H(+). It participates in amino-acid biosynthesis; L-leucine biosynthesis; L-leucine from 3-methyl-2-oxobutanoate: step 1/4. Catalyzes the condensation of the acetyl group of acetyl-CoA with 3-methyl-2-oxobutanoate (2-ketoisovalerate) to form 3-carboxy-3-hydroxy-4-methylpentanoate (2-isopropylmalate). The polypeptide is 2-isopropylmalate synthase (Campylobacter fetus subsp. fetus (strain 82-40)).